The chain runs to 173 residues: Peptide deformylase (173 aa).

Fe cation is bound by residues Cys98 and His140. The active site involves Glu141. His144 lines the Fe cation pocket.

It belongs to the polypeptide deformylase family. It depends on Fe(2+) as a cofactor.

The enzyme catalyses N-terminal N-formyl-L-methionyl-[peptide] + H2O = N-terminal L-methionyl-[peptide] + formate. Functionally, removes the formyl group from the N-terminal Met of newly synthesized proteins. Requires at least a dipeptide for an efficient rate of reaction. N-terminal L-methionine is a prerequisite for activity but the enzyme has broad specificity at other positions. This is Peptide deformylase from Caulobacter vibrioides (strain ATCC 19089 / CIP 103742 / CB 15) (Caulobacter crescentus).